Consider the following 107-residue polypeptide: U1-lycotoxin-Ls1c (107 aa).

The first 20 residues, 1 to 20, serve as a signal peptide directing secretion; that stretch reads MMKVLVVVALLVTLISYSSS. A propeptide spanning residues 21-41 is cleaved from the precursor; sequence EGIDDLEADELLSLMANEQTR. Disulfide bonds link cysteine 44/cysteine 59, cysteine 51/cysteine 68, cysteine 58/cysteine 86, and cysteine 70/cysteine 84.

This sequence belongs to the neurotoxin 19 (CSTX) family. 04 (U1-Lctx) subfamily. As to expression, expressed by the venom gland.

Its subcellular location is the secreted. The protein is U1-lycotoxin-Ls1c of Lycosa singoriensis (Wolf spider).